The primary structure comprises 73 residues: Translation initiation factor IF-1 (73 aa).

An S1-like domain is found at Met1 to Lys72.

This sequence belongs to the IF-1 family. In terms of assembly, component of the 30S ribosomal translation pre-initiation complex which assembles on the 30S ribosome in the order IF-2 and IF-3, IF-1 and N-formylmethionyl-tRNA(fMet); mRNA recruitment can occur at any time during PIC assembly.

It is found in the cytoplasm. In terms of biological role, one of the essential components for the initiation of protein synthesis. Stabilizes the binding of IF-2 and IF-3 on the 30S subunit to which N-formylmethionyl-tRNA(fMet) subsequently binds. Helps modulate mRNA selection, yielding the 30S pre-initiation complex (PIC). Upon addition of the 50S ribosomal subunit IF-1, IF-2 and IF-3 are released leaving the mature 70S translation initiation complex. This Psychrobacter arcticus (strain DSM 17307 / VKM B-2377 / 273-4) protein is Translation initiation factor IF-1.